Reading from the N-terminus, the 1011-residue chain is Translation initiation factor IF-2 (1011 aa).

Basic and acidic residues predominate over residues 49–77 (YIHEHGTEESPRRRSAGEDEFKPKIDLSK). Disordered regions lie at residues 49 to 152 (YIHE…RFIT) and 187 to 407 (AAPA…LSLS). Pro residues predominate over residues 93–104 (APPPPPPPPPRP). Over residues 105 to 115 (AVKAPSPVSQE) the composition is skewed to low complexity. Positions 116-126 (PRPPAVPPAPQ) are enriched in pro residues. 2 stretches are compositionally biased toward low complexity: residues 187–212 (AAPA…KAPV) and 228–242 (TAKP…AATP). Pro residues-rich tracts occupy residues 243 to 252 (APTPGRPLPG) and 276 to 290 (SAPP…PPPQ). Positions 316 to 329 (GPGGGSGGPGGFQR) are enriched in gly residues. Low complexity predominate over residues 361–380 (LAPPGAPANKPAGRPAPARR). Residues 502 to 678 (VRPPVVTIMG…CLVADLGDLK (177 aa)) form the tr-type G domain. The G1 stretch occupies residues 511-518 (GHVDHGKT). Residue 511–518 (GHVDHGKT) participates in GTP binding. Positions 536–540 (GITQH) are G2. A G3 region spans residues 564 to 567 (DTPG). Residues 564–568 (DTPGH) and 618–621 (NKID) each bind GTP. Positions 618–621 (NKID) are G4. Residues 654–656 (SAK) form a G5 region.

It belongs to the TRAFAC class translation factor GTPase superfamily. Classic translation factor GTPase family. IF-2 subfamily.

The protein resides in the cytoplasm. Functionally, one of the essential components for the initiation of protein synthesis. Protects formylmethionyl-tRNA from spontaneous hydrolysis and promotes its binding to the 30S ribosomal subunits. Also involved in the hydrolysis of GTP during the formation of the 70S ribosomal complex. This Koribacter versatilis (strain Ellin345) protein is Translation initiation factor IF-2.